A 429-amino-acid chain; its full sequence is Fc receptor-like protein 1 (429 aa).

Residues 1 to 16 form the signal peptide; that stretch reads MLPRLLLLICAPLCEP. Ig-like C2-type domains lie at 17-104, 109-200, and 208-291; these read AELF…SQIN, PVAD…VSIT, and PILM…EAVT. The Extracellular segment spans residues 17–307; the sequence is AELFLIASPS…TGARSNHLTS (291 aa). 3 cysteine pairs are disulfide-bonded: cysteine 38-cysteine 86, cysteine 134-cysteine 183, and cysteine 229-cysteine 276. A glycan (N-linked (GlcNAc...) asparagine) is linked at asparagine 293. Residues 308-328 form a helical membrane-spanning segment; it reads GVIEGLLSTLGPATVALLFCY. The Cytoplasmic portion of the chain corresponds to 329–429; it reads GLKRKIGRRS…ITDVDYEDAM (101 aa). Short sequence motifs (ITIM motif) lie at residues 354-359, 367-372, 379-384, 410-415, and 423-428; these read FTYLNS, PIYENV, EVYSLA, DIYSRL, and VDYEDA.

As to quaternary structure, interacts with ABL1. Interacts with GRB2 and SOS1. Interacts with SHIP-1/INPP5D. Post-translationally, phosphorylated on tyrosines upon activation. Primarily expressed in secondary lymphoid tissues by mature subsets of B-cells. Detected in spleen, lymph node, heart, skeletal muscle, kidney, liver and placenta. Specifically expressed by mature B lineage cells with higher expression in naive versus memory B-cells (at protein level).

The protein localises to the cell membrane. Type I transmembrane surface glycoprotein preferentially expressed by B-cells that regulates BCR-mediated signaling responses. Recruits ABL1 as the intracellular effector molecule to enhance B-cell activation. Also plays a negative role by suppressing ERK activation under homeostatic and BCR-stimulated conditions in a GRB2-dependent manner. The polypeptide is Fc receptor-like protein 1 (FCRL1) (Homo sapiens (Human)).